The primary structure comprises 123 residues: Large ribosomal subunit protein bL12 (123 aa).

This sequence belongs to the bacterial ribosomal protein bL12 family. In terms of assembly, homodimer. Part of the ribosomal stalk of the 50S ribosomal subunit. Forms a multimeric L10(L12)X complex, where L10 forms an elongated spine to which 2 to 4 L12 dimers bind in a sequential fashion. Binds GTP-bound translation factors.

Forms part of the ribosomal stalk which helps the ribosome interact with GTP-bound translation factors. Is thus essential for accurate translation. This Finegoldia magna (strain ATCC 29328 / DSM 20472 / WAL 2508) (Peptostreptococcus magnus) protein is Large ribosomal subunit protein bL12.